A 375-amino-acid chain; its full sequence is Putative glycyl-radical enzyme activating enzyme MJ0021 (375 aa).

The Radical SAM core domain occupies 23-246; it reads QCVKGGKLVL…LKVIKEFKGD (224 aa). The [4Fe-4S] cluster site is built by C38, C42, and C45. Residues 44 to 46 and G87 each bind S-adenosyl-L-methionine; that span reads YCP.

It belongs to the organic radical-activating enzymes family. Requires [4Fe-4S] cluster as cofactor.

It carries out the reaction glycyl-[protein] + reduced [flavodoxin] + S-adenosyl-L-methionine = glycin-2-yl radical-[protein] + semiquinone [flavodoxin] + 5'-deoxyadenosine + L-methionine + H(+). The sequence is that of Putative glycyl-radical enzyme activating enzyme MJ0021 from Methanocaldococcus jannaschii (strain ATCC 43067 / DSM 2661 / JAL-1 / JCM 10045 / NBRC 100440) (Methanococcus jannaschii).